Reading from the N-terminus, the 130-residue chain is Small ribosomal subunit protein uS11c (130 aa).

Belongs to the universal ribosomal protein uS11 family. Part of the 30S ribosomal subunit.

Its subcellular location is the plastid. The protein resides in the chloroplast. This Cycas taitungensis (Prince sago) protein is Small ribosomal subunit protein uS11c.